A 280-amino-acid chain; its full sequence is Proteasome subunit beta 2 (280 aa).

Positions 1–52 are cleaved as a propeptide — removed in mature form; by autocatalysis; the sequence is MTERERGQGLPAEFFAVGTASFVELLSRTAPQLLPVNRVRDGSHPMPDIPHG. T53 serves as the catalytic Nucleophile.

Belongs to the peptidase T1B family. In terms of assembly, the 20S proteasome core is composed of 14 alpha and 14 beta subunits that assemble into four stacked heptameric rings, resulting in a barrel-shaped structure. The two inner rings, each composed of seven catalytic beta subunits, are sandwiched by two outer rings, each composed of seven alpha subunits. The catalytic chamber with the active sites is on the inside of the barrel. Has a gated structure, the ends of the cylinder being occluded by the N-termini of the alpha-subunits. Is capped by the proteasome-associated ATPase, ARC.

The protein resides in the cytoplasm. It catalyses the reaction Cleavage of peptide bonds with very broad specificity.. Its pathway is protein degradation; proteasomal Pup-dependent pathway. Its activity is regulated as follows. The formation of the proteasomal ATPase ARC-20S proteasome complex, likely via the docking of the C-termini of ARC into the intersubunit pockets in the alpha-rings, may trigger opening of the gate for substrate entry. Interconversion between the open-gate and close-gate conformations leads to a dynamic regulation of the 20S proteasome proteolysis activity. Its function is as follows. Component of the proteasome core, a large protease complex with broad specificity involved in protein degradation. The sequence is that of Proteasome subunit beta 2 from Thermomonospora curvata (strain ATCC 19995 / DSM 43183 / JCM 3096 / KCTC 9072 / NBRC 15933 / NCIMB 10081 / Henssen B9).